A 331-amino-acid chain; its full sequence is Ketol-acid reductoisomerase (NADP(+)) (331 aa).

The KARI N-terminal Rossmann domain maps to 1–181 (MKMYYDADAD…GGTRAGVIET (181 aa)). Residues 24–27 (YGSQ), R47, S50, and 82–85 (DEKQ) each bind NADP(+). H107 is a catalytic residue. G133 serves as a coordination point for NADP(+). One can recognise a KARI C-terminal knotted domain in the interval 182–327 (TFREETETDL…KKLRAMMPWL (146 aa)). D190, E194, E226, and E230 together coordinate Mg(2+). S251 contacts substrate.

The protein belongs to the ketol-acid reductoisomerase family. The cofactor is Mg(2+).

The enzyme catalyses (2R)-2,3-dihydroxy-3-methylbutanoate + NADP(+) = (2S)-2-acetolactate + NADPH + H(+). It catalyses the reaction (2R,3R)-2,3-dihydroxy-3-methylpentanoate + NADP(+) = (S)-2-ethyl-2-hydroxy-3-oxobutanoate + NADPH + H(+). The protein operates within amino-acid biosynthesis; L-isoleucine biosynthesis; L-isoleucine from 2-oxobutanoate: step 2/4. It functions in the pathway amino-acid biosynthesis; L-valine biosynthesis; L-valine from pyruvate: step 2/4. Functionally, involved in the biosynthesis of branched-chain amino acids (BCAA). Catalyzes an alkyl-migration followed by a ketol-acid reduction of (S)-2-acetolactate (S2AL) to yield (R)-2,3-dihydroxy-isovalerate. In the isomerase reaction, S2AL is rearranged via a Mg-dependent methyl migration to produce 3-hydroxy-3-methyl-2-ketobutyrate (HMKB). In the reductase reaction, this 2-ketoacid undergoes a metal-dependent reduction by NADPH to yield (R)-2,3-dihydroxy-isovalerate. The protein is Ketol-acid reductoisomerase (NADP(+)) of Heliobacterium modesticaldum (strain ATCC 51547 / Ice1).